The primary structure comprises 343 residues: Aspartate carbamoyltransferase catalytic subunit (343 aa).

Residues arginine 91 and threonine 92 each coordinate carbamoyl phosphate. Lysine 119 contributes to the L-aspartate binding site. Positions 141, 171, and 174 each coordinate carbamoyl phosphate. L-aspartate is bound by residues arginine 204 and arginine 259. The carbamoyl phosphate site is built by glycine 300 and proline 301.

It belongs to the aspartate/ornithine carbamoyltransferase superfamily. ATCase family. As to quaternary structure, heterododecamer (2C3:3R2) of six catalytic PyrB chains organized as two trimers (C3), and six regulatory PyrI chains organized as three dimers (R2).

It carries out the reaction carbamoyl phosphate + L-aspartate = N-carbamoyl-L-aspartate + phosphate + H(+). It functions in the pathway pyrimidine metabolism; UMP biosynthesis via de novo pathway; (S)-dihydroorotate from bicarbonate: step 2/3. Functionally, catalyzes the condensation of carbamoyl phosphate and aspartate to form carbamoyl aspartate and inorganic phosphate, the committed step in the de novo pyrimidine nucleotide biosynthesis pathway. The sequence is that of Aspartate carbamoyltransferase catalytic subunit from Burkholderia orbicola (strain MC0-3).